The primary structure comprises 164 residues: Large ribosomal subunit protein bL19 (164 aa).

The interval 144–164 is disordered; that stretch reads EAEKQTEVQAEPKIEKSEEKK.

It belongs to the bacterial ribosomal protein bL19 family.

In terms of biological role, this protein is located at the 30S-50S ribosomal subunit interface and may play a role in the structure and function of the aminoacyl-tRNA binding site. The polypeptide is Large ribosomal subunit protein bL19 (Pelagibacter ubique (strain HTCC1062)).